We begin with the raw amino-acid sequence, 670 residues long: Protein-glutamine gamma-glutamyltransferase 4 (670 aa).

Asparagine 151 and asparagine 219 each carry an N-linked (GlcNAc...) asparagine glycan. Residue cysteine 255 is part of the active site. Asparagine 288 carries an N-linked (GlcNAc...) asparagine glycan. Catalysis depends on residues histidine 314 and aspartate 337. Residues asparagine 377, aspartate 379, glutamate 429, and glutamate 434 each contribute to the Ca(2+) site. N-linked (GlcNAc...) asparagine glycosylation is found at asparagine 456 and asparagine 491.

This sequence belongs to the transglutaminase superfamily. Transglutaminase family. Homodimer. It depends on Ca(2+) as a cofactor. In terms of tissue distribution, expressed in the coagulating gland and in the dorsal part of the prostate. Not expressed in the brain, heart, kidney, liver, lung, muscle, pancreas, spleen, stomach, testis and thymus.

The protein localises to the secreted. The catalysed reaction is L-glutaminyl-[protein] + L-lysyl-[protein] = [protein]-L-lysyl-N(6)-5-L-glutamyl-[protein] + NH4(+). Functionally, associated with the mammalian reproductive process. Plays an important role in the formation of the seminal coagulum through the cross-linking of specific proteins present in the seminal plasma. Transglutaminase is also required to stabilize the copulatory plug. The sequence is that of Protein-glutamine gamma-glutamyltransferase 4 from Mus musculus (Mouse).